Consider the following 225-residue polypeptide: Ureidoacrylate amidohydrolase RutB (225 aa).

D22 serves as the catalytic Proton acceptor. The active site involves K131. Residue C164 is the Nucleophile of the active site.

Belongs to the isochorismatase family. RutB subfamily.

The enzyme catalyses (Z)-3-ureidoacrylate + H2O + H(+) = (Z)-3-aminoacrylate + NH4(+) + CO2. It carries out the reaction (Z)-3-ureidoacrylate + H2O = (Z)-3-aminoacrylate + carbamate + H(+). It catalyses the reaction (Z)-2-methylureidoacrylate + H2O + H(+) = (Z)-2-methylaminoacrylate + NH4(+) + CO2. Functionally, hydrolyzes ureidoacrylate to form aminoacrylate and carbamate. The carbamate hydrolyzes spontaneously, thereby releasing one of the nitrogen atoms of the pyrimidine ring as ammonia and one of its carbon atoms as CO2. The chain is Ureidoacrylate amidohydrolase RutB from Caulobacter vibrioides (strain ATCC 19089 / CIP 103742 / CB 15) (Caulobacter crescentus).